The following is a 362-amino-acid chain: Beta-ketoacyl-[acyl-carrier-protein] synthase III 2 (362 aa).

Catalysis depends on residues Cys-113 and His-251. Residues 252-256 (QANIR) form an ACP-binding region. Asn-281 is a catalytic residue.

The protein belongs to the thiolase-like superfamily. FabH family. Homodimer.

It localises to the cytoplasm. The enzyme catalyses malonyl-[ACP] + acetyl-CoA + H(+) = 3-oxobutanoyl-[ACP] + CO2 + CoA. It participates in lipid metabolism; fatty acid biosynthesis. Its function is as follows. Catalyzes the condensation reaction of fatty acid synthesis by the addition to an acyl acceptor of two carbons from malonyl-ACP. Catalyzes the first condensation reaction which initiates fatty acid synthesis and may therefore play a role in governing the total rate of fatty acid production. Possesses both acetoacetyl-ACP synthase and acetyl transacylase activities. Its substrate specificity determines the biosynthesis of branched-chain and/or straight-chain of fatty acids. In Vibrio vulnificus (strain YJ016), this protein is Beta-ketoacyl-[acyl-carrier-protein] synthase III 2.